Consider the following 64-residue polypeptide: Large ribosomal subunit protein uL30 (64 aa).

The tract at residues 1-22 (MAKAAKTIKVEQTGSAIRRHHS) is disordered.

This sequence belongs to the universal ribosomal protein uL30 family. As to quaternary structure, part of the 50S ribosomal subunit.

This is Large ribosomal subunit protein uL30 from Nitrobacter winogradskyi (strain ATCC 25391 / DSM 10237 / CIP 104748 / NCIMB 11846 / Nb-255).